We begin with the raw amino-acid sequence, 820 residues long: MAAFERNPSRWKGTRFRRGLGASRIAAQAILSLTEKQSQGRWPSFPLGLKSKGTFRSASSYLLHQLIHRSHEAEAEQEEKQQEDGESEESEESEMQNLEDKYDGILREETVAEAITGLGWSGRGTEQVYLNLNLSHCELVDISILCGYVHLQKLNLSGNRIEDLSCVSCMPYLLELNASQNKLTTFFNFKPPQNLKKVDFSSNLISEMYDLSAYHTLTQLILDNNEIEEITGLENCISLTHLSLAGNKITTIKGLGTLPIKVLSLSNNMIETITGLEELKALQNLDLSHNQISSLQGLENHDLLEVINLEDNKIKELSEIEYIENLPILRVLNLLRNPIQTKPEYWFFVIYMLLRLTELDQQKIKVEEKVFAVNKYDPPPEVVAVQDHMTHVVNSMSQPQRIWDSTLPSLDAPYPMLILTGPAACGKRELAHRLCRQFSTYFRYGACHTTRPPYFGEGDRVDYHFISQEVFDEMLNMGKFILTFNYGNHNYGLNRDTIEGIARDGLASCIHMELEGVRSLKYSYFEPRYILVVPMDKEKYEGYLRRKGLFSRAEIEIAVSRVDLYVKVNQKYPGYFDAVINADDMDIAYQKLSELIREYLGLTETAAKTLAPTADTKTSYLKCEDYSRKSSTVEFLDSTDRNYFTKLWAKLSSKKSPVERESLHRQHEAARQALMGKTPRDHTLLFQRGPVPIPTVSGQQYFATIDELQKTFELSDDLFKTPSGTYPETSKDSNISKRYSTYFHTCPWSKELPFQLPEGGISSRPGSAGSDEVDGALKALRVASSMQEKVAQHKRLSAITIMDPGSNTKPTLPPIPHGRR.

The segment covering 72–83 has biased composition (basic and acidic residues); the sequence is EAEAEQEEKQQE. Residues 72–96 are disordered; sequence EAEAEQEEKQQEDGESEESEESEMQ. The segment covering 84-94 has biased composition (acidic residues); the sequence is DGESEESEESE. LRR repeat units follow at residues 129 to 149, 150 to 171, 172 to 193, 194 to 215, 216 to 237, 238 to 259, 260 to 280, 281 to 302, and 303 to 324; these read YLNL…CGYV, HLQK…SCMP, YLLE…KPPQ, NLKK…SAYH, TLTQ…ENCI, SLTH…GTLP, IKVL…EELK, ALQN…ENHD, and LLEV…EYIE. The LRRCT domain maps to 337–375; that stretch reads NPIQTKPEYWFFVIYMLLRLTELDQQKIKVEEKVFAVNK. Positions 414 to 597 constitute a Guanylate kinase-like domain; it reads YPMLILTGPA…AYQKLSELIR (184 aa). 421-428 is an ATP binding site; that stretch reads GPAACGKR. Residues 800–820 form a disordered region; the sequence is TIMDPGSNTKPTLPPIPHGRR. The span at 811 to 820 shows a compositional bias: pro residues; the sequence is TLPPIPHGRR.

As to quaternary structure, interacts (via guanylate kinase-like domain) with RIMBP3 (via coiled-coil region). Interacts (via guanylate kinase-like domain) with HOOK2. Interacts (via LRRCT domain) with KLC3. Interacts with HOOK1 and HOOK3. Highly expressed in the testis. During spermatid development is initially localized to a supra-nuclear region of round spermatids, and is particularly evident at the leading edge of the developing acrosome and acroplaxome. As maturation proceeded and nuclear elongation initiated, LRGUK moves distally to ultimately reside on the microtubules of the manchette. LRGUK is also evident in the sperm basal body and the sperm tail.

Its subcellular location is the cytoplasmic vesicle. It is found in the secretory vesicle. It localises to the acrosome. The protein localises to the cytoplasm. The protein resides in the cytoskeleton. Its subcellular location is the cilium basal body. In terms of biological role, involved in multiple aspects of sperm assembly including acrosome attachment, shaping of the sperm head and in the early aspects of axoneme development. Not essential for primary cilium biogenesis. In Mus musculus (Mouse), this protein is Leucine-rich repeat and guanylate kinase domain-containing protein (Lrguk).